The sequence spans 1516 residues: Lysine-specific demethylase 5C (1516 aa).

The 42-residue stretch at 14–55 folds into the JmjN domain; it reads CPVFEPSWAEFRDPLGYIAKIRPIAEKSGICKIRPPADWQPP. The 105-residue stretch at 24–128 folds into the ARID domain; sequence FRDPLGYIAK…IVYPYEMYQS (105 aa). Residues 142 to 151 are compositionally biased toward basic and acidic residues; sequence NEEKDKEYKP. A disordered region spans residues 142–186; it reads NEEKDKEYKPHSIPLRQSVQPSKFNSYGRRAKRLQPDPEPTEEDI. The segment covering 156-166 has biased composition (polar residues); the sequence is LRQSVQPSKFN. Residues Lys-164, Lys-188, Lys-203, and Lys-233 each participate in a glycyl lysine isopeptide (Lys-Gly) (interchain with G-Cter in SUMO2) cross-link. Residues 216–262 form a disordered region; it reads LRKKDKEGPECPPTVVVKEESGGDVKVESTSPKTFLESKEELSHSPE. Residues 232-242 show a composition bias toward basic and acidic residues; it reads VKEESGGDVKV. Residue Ser-246 is modified to Phosphoserine. Residue Lys-254 forms a Glycyl lysine isopeptide (Lys-Gly) (interchain with G-Cter in SUMO2) linkage. Ser-260 and Ser-276 each carry phosphoserine. Residues 283 to 333 form a PHD-type 1 zinc finger; it reads SYVCRMCSRGDEDDKLLLCDGCDDNYHIFCLLPPLPEIPKGVWRCPKCVMA. Residue Tyr-399 coordinates 2-oxoglutarate. Residues 427–593 enclose the JmjC domain; sequence EYATSGWNLN…AGRQCIEHYR (167 aa). His-473 and Glu-475 together coordinate Fe cation. Ser-481, Asn-483, and Lys-491 together coordinate 2-oxoglutarate. Fe cation is bound at residue His-561. The C5HC2 zinc-finger motif lies at 666–718; that stretch reads CIKCKTTCFLSALACYDCPDGLVCLSHINDLCKCSSSRQYLRYRYTLDELPAM. Phosphoserine is present on residues Ser-852 and Ser-856. A Glycyl lysine isopeptide (Lys-Gly) (interchain with G-Cter in SUMO2) cross-link involves residue Lys-1086. The PHD-type 2 zinc-finger motif lies at 1144 to 1209; it reads TSICVCGQVP…KFLCPLCMRS (66 aa). Residues 1274-1305 are disordered; it reads LQAEPRPEEPPTYPSTPAFDPLREGSGKDMPK. The span at 1294–1304 shows a compositional bias: basic and acidic residues; sequence PLREGSGKDMP. Ser-1318 bears the Phosphoserine mark. Positions 1400 to 1516 are disordered; sequence ERHGSRARGR…CPQQPPQQQL (117 aa). Residues 1404–1419 show a composition bias toward basic residues; it reads SRARGRALERRRRRKV. Basic and acidic residues predominate over residues 1420-1437; it reads DRGGEGDDPAREELEPKR. The segment covering 1444-1459 has biased composition (acidic residues); that stretch reads EAEEAHEEEELEEETG. Composition is skewed to polar residues over residues 1471-1481 and 1489-1500; these read GSPSTQENQNG and SSGSSVPFSTLT.

It belongs to the JARID1 histone demethylase family. Part of two distinct complexes, one containing E2F6, and the other containing REST. Interacts with ZMYND8. It depends on Fe(2+) as a cofactor.

The protein resides in the nucleus. The enzyme catalyses N(6),N(6),N(6)-trimethyl-L-lysyl(4)-[histone H3] + 3 2-oxoglutarate + 3 O2 = L-lysyl(4)-[histone H3] + 3 formaldehyde + 3 succinate + 3 CO2. In terms of biological role, histone demethylase that specifically demethylates 'Lys-4' of histone H3, thereby playing a central role in histone code. Does not demethylate histone H3 'Lys-9', H3 'Lys-27', H3 'Lys-36', H3 'Lys-79' or H4 'Lys-20'. Demethylates trimethylated and dimethylated but not monomethylated H3 'Lys-4'. Participates in transcriptional repression of neuronal genes by recruiting histone deacetylases and REST at neuron-restrictive silencer elements. In Sus scrofa (Pig), this protein is Lysine-specific demethylase 5C (KDM5C).